The following is a 161-amino-acid chain: 6,7-dimethyl-8-ribityllumazine synthase (161 aa).

5-amino-6-(D-ribitylamino)uracil is bound by residues W31, 63–65 (SFE), and 85–87 (VVI). 90-91 (GT) is a (2S)-2-hydroxy-3-oxobutyl phosphate binding site. H93 (proton donor) is an active-site residue. 5-amino-6-(D-ribitylamino)uracil is bound at residue F118. R132 is a binding site for (2S)-2-hydroxy-3-oxobutyl phosphate.

It belongs to the DMRL synthase family.

It catalyses the reaction (2S)-2-hydroxy-3-oxobutyl phosphate + 5-amino-6-(D-ribitylamino)uracil = 6,7-dimethyl-8-(1-D-ribityl)lumazine + phosphate + 2 H2O + H(+). The protein operates within cofactor biosynthesis; riboflavin biosynthesis; riboflavin from 2-hydroxy-3-oxobutyl phosphate and 5-amino-6-(D-ribitylamino)uracil: step 1/2. In terms of biological role, catalyzes the formation of 6,7-dimethyl-8-ribityllumazine by condensation of 5-amino-6-(D-ribitylamino)uracil with 3,4-dihydroxy-2-butanone 4-phosphate. This is the penultimate step in the biosynthesis of riboflavin. The protein is 6,7-dimethyl-8-ribityllumazine synthase of Paenarthrobacter aurescens (strain TC1).